Reading from the N-terminus, the 373-residue chain is Potential protein lysine methyltransferase SET6 (373 aa).

The 327-residue stretch at 12 to 338 (PFFQVRQTKW…KDEQICIDYS (327 aa)) folds into the SET domain.

Belongs to the class V-like SAM-binding methyltransferase superfamily.

Involved in resistance to compounds that target ergosterol biosynthesis, including fenpropimorph, dyclonine, and alverine citrate. Since a deletion in the absence of these compounds does not have an effect on growth, is more likely to be involved in compound availability. In Saccharomyces cerevisiae (strain ATCC 204508 / S288c) (Baker's yeast), this protein is Potential protein lysine methyltransferase SET6 (SET6).